The following is a 430-amino-acid chain: Tol-Pal system protein TolB (430 aa).

An N-terminal signal peptide occupies residues 1–21 (MKQALRVAFGFLILWASVLHA).

This sequence belongs to the TolB family. In terms of assembly, the Tol-Pal system is composed of five core proteins: the inner membrane proteins TolA, TolQ and TolR, the periplasmic protein TolB and the outer membrane protein Pal. They form a network linking the inner and outer membranes and the peptidoglycan layer.

It is found in the periplasm. Functionally, part of the Tol-Pal system, which plays a role in outer membrane invagination during cell division and is important for maintaining outer membrane integrity. TolB occupies a key intermediary position in the Tol-Pal system because it communicates directly with both membrane-embedded components, Pal in the outer membrane and TolA in the inner membrane. This is Tol-Pal system protein TolB from Shigella dysenteriae serotype 1 (strain Sd197).